We begin with the raw amino-acid sequence, 59 residues long: Large ribosomal subunit protein uL30 (59 aa).

It belongs to the universal ribosomal protein uL30 family. In terms of assembly, part of the 50S ribosomal subunit.

In Escherichia coli (strain UTI89 / UPEC), this protein is Large ribosomal subunit protein uL30.